A 1175-amino-acid polypeptide reads, in one-letter code: uncharacterized protein (1175 aa).

Residue Gly586 to Thr593 participates in ATP binding.

This is an uncharacterized protein from Methanocaldococcus jannaschii (strain ATCC 43067 / DSM 2661 / JAL-1 / JCM 10045 / NBRC 100440) (Methanococcus jannaschii).